The primary structure comprises 308 residues: Ribosomal protein uL3 glutamine methyltransferase (308 aa).

Belongs to the protein N5-glutamine methyltransferase family. PrmB subfamily.

It carries out the reaction L-glutaminyl-[ribosomal protein uL3] + S-adenosyl-L-methionine = N(5)-methyl-L-glutaminyl-[ribosomal protein uL3] + S-adenosyl-L-homocysteine + H(+). In terms of biological role, methylates large ribosomal subunit protein uL3 on a specific glutamine residue. The polypeptide is Ribosomal protein uL3 glutamine methyltransferase (Xanthomonas campestris pv. campestris (strain ATCC 33913 / DSM 3586 / NCPPB 528 / LMG 568 / P 25)).